Reading from the N-terminus, the 661-residue chain is Pseudouridylate synthase 7 homolog (661 aa).

Position 1 is an N-acetylmethionine (Met1). Residues Met1–Glu97 form a disordered region. Ser10 carries the post-translational modification Phosphoserine. Over residues Ser36 to Leu52 the composition is skewed to polar residues. Positions Gln77–Glu97 are enriched in acidic residues. Position 127 is a phosphoserine (Ser127). Residue Asp294 is the Nucleophile of the active site. In terms of domain architecture, TRUD spans Gly370–Arg580. Thr610 carries the phosphothreonine modification.

Belongs to the pseudouridine synthase TruD family. In terms of assembly, interacts with SIRT1.

It is found in the nucleus. The enzyme catalyses a uridine in tRNA = a pseudouridine in tRNA. It carries out the reaction uridine(13) in tRNA = pseudouridine(13) in tRNA. It catalyses the reaction a uridine in mRNA = a pseudouridine in mRNA. Pseudouridylate synthase that catalyzes pseudouridylation of RNAs. Acts as a regulator of protein synthesis in embryonic stem cells by mediating pseudouridylation of RNA fragments derived from tRNAs (tRFs): pseudouridylated tRFs inhibit translation by targeting the translation initiation complex. Also catalyzes pseudouridylation of mRNAs: mediates pseudouridylation of mRNAs with the consensus sequence 5'-UGUAG-3'. Acts as a regulator of pre-mRNA splicing by mediating pseudouridylation of pre-mRNAs at locations associated with alternatively spliced regions. Pseudouridylation of pre-mRNAs near splice sites directly regulates mRNA splicing and mRNA 3'-end processing. In addition to mRNAs and tRNAs, binds other types of RNAs, such as snRNAs, Y RNAs and vault RNAs, suggesting that it can catalyze pseudouridylation of many RNA types. In Homo sapiens (Human), this protein is Pseudouridylate synthase 7 homolog.